A 309-amino-acid chain; its full sequence is Acetyl-coenzyme A carboxylase carboxyl transferase subunit beta (309 aa).

Positions 29-298 (NSDWTSCCKG…AINSSENETS (270 aa)) constitute a CoA carboxyltransferase N-terminal domain. Positions 35, 36, 52, and 55 each coordinate Zn(2+).

It belongs to the AccD/PCCB family. In terms of assembly, acetyl-CoA carboxylase is a heterohexamer composed of biotin carboxyl carrier protein (AccB), biotin carboxylase (AccC) and two subunits each of ACCase subunit alpha (AccA) and ACCase subunit beta (AccD). Requires Zn(2+) as cofactor.

Its subcellular location is the cytoplasm. The enzyme catalyses N(6)-carboxybiotinyl-L-lysyl-[protein] + acetyl-CoA = N(6)-biotinyl-L-lysyl-[protein] + malonyl-CoA. It participates in lipid metabolism; malonyl-CoA biosynthesis; malonyl-CoA from acetyl-CoA: step 1/1. In terms of biological role, component of the acetyl coenzyme A carboxylase (ACC) complex. Biotin carboxylase (BC) catalyzes the carboxylation of biotin on its carrier protein (BCCP) and then the CO(2) group is transferred by the transcarboxylase to acetyl-CoA to form malonyl-CoA. The sequence is that of Acetyl-coenzyme A carboxylase carboxyl transferase subunit beta from Pelagibacter ubique (strain HTCC1062).